The sequence spans 209 residues: Uracil phosphoribosyltransferase (209 aa).

5-phospho-alpha-D-ribose 1-diphosphate contacts are provided by residues Arg79, Arg104, and 131-139; that span reads DPMLATGGS. Uracil is bound by residues Ile194 and 199 to 201; that span reads GDA. Residue Asp200 coordinates 5-phospho-alpha-D-ribose 1-diphosphate.

Belongs to the UPRTase family. Mg(2+) is required as a cofactor.

It carries out the reaction UMP + diphosphate = 5-phospho-alpha-D-ribose 1-diphosphate + uracil. Its pathway is pyrimidine metabolism; UMP biosynthesis via salvage pathway; UMP from uracil: step 1/1. Its activity is regulated as follows. Allosterically activated by GTP. In terms of biological role, catalyzes the conversion of uracil and 5-phospho-alpha-D-ribose 1-diphosphate (PRPP) to UMP and diphosphate. The chain is Uracil phosphoribosyltransferase from Clostridium botulinum (strain Alaska E43 / Type E3).